Reading from the N-terminus, the 262-residue chain is High-affinity zinc uptake system membrane protein ZnuB (262 aa).

7 helical membrane-spanning segments follow: residues 8 to 28 (GWLA…FIVW), 54 to 74 (INSF…LAWL), 84 to 104 (TVLN…ISLI), 129 to 149 (ITIS…WHSI), 179 to 199 (FTIA…LLII), 215 to 235 (VIIA…LSVF), and 238 to 254 (TPAS…LCLI).

The protein belongs to the ABC-3 integral membrane protein family.

It is found in the cell membrane. Functionally, involved in the high-affinity zinc uptake transport system. This Buchnera aphidicola subsp. Acyrthosiphon pisum (strain APS) (Acyrthosiphon pisum symbiotic bacterium) protein is High-affinity zinc uptake system membrane protein ZnuB (znuB).